We begin with the raw amino-acid sequence, 230 residues long: Probable phosphatase IndB (230 aa).

The active-site Nucleophile is the Asp-8. The Mg(2+) site is built by Asp-8, Asp-10, and Asp-169. Residue Asp-10 is the Proton donor of the active site.

This sequence belongs to the HAD-like hydrolase superfamily. Mg(2+) is required as a cofactor.

Its function is as follows. Part of an operon that could be involved in the biosynthesis of the blue pigment indigoidine, which is implicated in pathogenicity and protection from oxidative stress. The polypeptide is Probable phosphatase IndB (Dickeya dadantii (strain 3937) (Erwinia chrysanthemi (strain 3937))).